We begin with the raw amino-acid sequence, 1044 residues long: Isoleucine--tRNA ligase (1044 aa).

The short motif at 48–58 (PFATGLPHFGH) is the 'HIGH' region element. Positions 594–598 (KMSKS) match the 'KMSKS' region motif. Lys-597 contributes to the ATP binding site.

This sequence belongs to the class-I aminoacyl-tRNA synthetase family. IleS type 2 subfamily. In terms of assembly, monomer. Zn(2+) is required as a cofactor.

Its subcellular location is the cytoplasm. The catalysed reaction is tRNA(Ile) + L-isoleucine + ATP = L-isoleucyl-tRNA(Ile) + AMP + diphosphate. In terms of biological role, catalyzes the attachment of isoleucine to tRNA(Ile). As IleRS can inadvertently accommodate and process structurally similar amino acids such as valine, to avoid such errors it has two additional distinct tRNA(Ile)-dependent editing activities. One activity is designated as 'pretransfer' editing and involves the hydrolysis of activated Val-AMP. The other activity is designated 'posttransfer' editing and involves deacylation of mischarged Val-tRNA(Ile). The protein is Isoleucine--tRNA ligase of Borrelia duttonii (strain Ly).